Reading from the N-terminus, the 718-residue chain is Glycine--tRNA ligase beta subunit (718 aa).

Belongs to the class-II aminoacyl-tRNA synthetase family. Tetramer of two alpha and two beta subunits.

It localises to the cytoplasm. The enzyme catalyses tRNA(Gly) + glycine + ATP = glycyl-tRNA(Gly) + AMP + diphosphate. The polypeptide is Glycine--tRNA ligase beta subunit (Mesorhizobium japonicum (strain LMG 29417 / CECT 9101 / MAFF 303099) (Mesorhizobium loti (strain MAFF 303099))).